A 530-amino-acid chain; its full sequence is MELNKNYKLNKQQSRALTLMCQDKNIFITAPAGAGKTLLINHYCDYVRQHEPFKKIAITSTTGVSAILIGGSTLHSYLGIGLGDGTIEDLVQRIKKASKGIKERVWKELTTLIIDEVSMLNPVLFDKLEKIARIIRGSDLPFGGIQLILSGDLLQLPVVKGGGTGNKNDHNMEFVTDANSWKKCIGNNIVLLTEIMRQKDFHFKEILLKIRVGNIDQQVRSVLSQHMKKEEKLKKEEIQPTRLFCLKKYVQDLNDSELKKLEDSGKKFINFNALIKKYSEEAVLTNKGRSRCTDLQFKFLSDRFVKDSTTPQHLRVCEGAQVMLTYNIDQLSGLVNGSRGVIIGFTEMKFPIVRFKNHKRNNLTPKLNKTNEDIKSDSTSQPQGFPEGNRRVMENPETKVSKTDDEEMNDTLELEVRPQTWEICNDFGKKIGYFKQIPLKIAYALTIHSCQGSTLDSAEVDLSDTFEHGQVYTALSRTRDLNSLVIKNLCFDSIKCHPRALQFYDDIKSMQDAISEIENSLSELDFDDDF.

Residues 362–408 (NLTPKLNKTNEDIKSDSTSQPQGFPEGNRRVMENPETKVSKTDDEEM) are disordered. A compositionally biased stretch (basic and acidic residues) spans 388-403 (GNRRVMENPETKVSKT).

It belongs to the IIV-6 030L family.

This is an uncharacterized protein from Invertebrate iridescent virus 6 (IIV-6).